The primary structure comprises 244 residues: MIVIPAIDLKEGKCVRLEQGLMEKDTVFCDNPADQAREWERQGAELLHIVDLDGAFAGEPKNRASIEAIVKAIAIPTQLGGGIRDIPTIEAYLSLGIGRVILGTAAQRNPELVEEACRLFPGRIVVGIDAKNGMVAVQGWAEVTGVTAVDLAKRFEGYGVAAIIYTDIARDGMMQGPNIEATRALAEAISIPVIASGGVSSLKDIENLMAIETSGIAGAITGKAVYTGAINLAEAVALTKRGGA.

The active-site Proton acceptor is the aspartate 8. The active-site Proton donor is the aspartate 129.

The protein belongs to the HisA/HisF family.

It localises to the cytoplasm. It catalyses the reaction 1-(5-phospho-beta-D-ribosyl)-5-[(5-phospho-beta-D-ribosylamino)methylideneamino]imidazole-4-carboxamide = 5-[(5-phospho-1-deoxy-D-ribulos-1-ylimino)methylamino]-1-(5-phospho-beta-D-ribosyl)imidazole-4-carboxamide. Its pathway is amino-acid biosynthesis; L-histidine biosynthesis; L-histidine from 5-phospho-alpha-D-ribose 1-diphosphate: step 4/9. This is 1-(5-phosphoribosyl)-5-[(5-phosphoribosylamino)methylideneamino] imidazole-4-carboxamide isomerase from Geobacter sulfurreducens (strain ATCC 51573 / DSM 12127 / PCA).